Consider the following 87-residue polypeptide: Cell division topological specificity factor (87 aa).

This sequence belongs to the MinE family.

In terms of biological role, prevents the cell division inhibition by proteins MinC and MinD at internal division sites while permitting inhibition at polar sites. This ensures cell division at the proper site by restricting the formation of a division septum at the midpoint of the long axis of the cell. The sequence is that of Cell division topological specificity factor from Neisseria meningitidis serogroup C (strain 053442).